The primary structure comprises 297 residues: Guanylate kinase (297 aa).

The region spanning 5 to 184 is the Guanylate kinase-like domain; the sequence is GKVIIISGPS…AVSKITDILI (180 aa). 12–19 lines the ATP pocket; sequence GPSGVGKG. The interval 205–297 is unknown; sequence ENIVDQKYTY…IKQRSDFSGD (93 aa).

This sequence belongs to the guanylate kinase family.

The protein resides in the cytoplasm. The catalysed reaction is GMP + ATP = GDP + ADP. Its function is as follows. Essential for recycling GMP and indirectly, cGMP. This is Guanylate kinase (gmk) from Mesoplasma florum (strain ATCC 33453 / NBRC 100688 / NCTC 11704 / L1) (Acholeplasma florum).